We begin with the raw amino-acid sequence, 609 residues long: Dihydroxy-acid dehydratase (609 aa).

D82 provides a ligand contact to Mg(2+). C123 provides a ligand contact to [2Fe-2S] cluster. Mg(2+) is bound by residues D124 and K125. K125 carries the post-translational modification N6-carboxylysine. Residue C192 coordinates [2Fe-2S] cluster. E489 is a Mg(2+) binding site. Catalysis depends on S515, which acts as the Proton acceptor.

This sequence belongs to the IlvD/Edd family. Homodimer. [2Fe-2S] cluster is required as a cofactor. The cofactor is Mg(2+).

It catalyses the reaction (2R)-2,3-dihydroxy-3-methylbutanoate = 3-methyl-2-oxobutanoate + H2O. The catalysed reaction is (2R,3R)-2,3-dihydroxy-3-methylpentanoate = (S)-3-methyl-2-oxopentanoate + H2O. The protein operates within amino-acid biosynthesis; L-isoleucine biosynthesis; L-isoleucine from 2-oxobutanoate: step 3/4. It functions in the pathway amino-acid biosynthesis; L-valine biosynthesis; L-valine from pyruvate: step 3/4. Functions in the biosynthesis of branched-chain amino acids. Catalyzes the dehydration of (2R,3R)-2,3-dihydroxy-3-methylpentanoate (2,3-dihydroxy-3-methylvalerate) into 2-oxo-3-methylpentanoate (2-oxo-3-methylvalerate) and of (2R)-2,3-dihydroxy-3-methylbutanoate (2,3-dihydroxyisovalerate) into 2-oxo-3-methylbutanoate (2-oxoisovalerate), the penultimate precursor to L-isoleucine and L-valine, respectively. This is Dihydroxy-acid dehydratase from Azobacteroides pseudotrichonymphae genomovar. CFP2.